The sequence spans 441 residues: 3-phosphoshikimate 1-carboxyvinyltransferase (441 aa).

3-phosphoshikimate-binding residues include K26, S27, and R31. Residue K26 coordinates phosphoenolpyruvate. Residues G99 and R127 each contribute to the phosphoenolpyruvate site. 3-phosphoshikimate-binding residues include S173, S174, Q175, S203, D320, and K347. Q175 is a phosphoenolpyruvate binding site. D320 acts as the Proton acceptor in catalysis. Residues R351, R393, and K423 each contribute to the phosphoenolpyruvate site.

Belongs to the EPSP synthase family. As to quaternary structure, monomer.

The protein localises to the cytoplasm. The enzyme catalyses 3-phosphoshikimate + phosphoenolpyruvate = 5-O-(1-carboxyvinyl)-3-phosphoshikimate + phosphate. The protein operates within metabolic intermediate biosynthesis; chorismate biosynthesis; chorismate from D-erythrose 4-phosphate and phosphoenolpyruvate: step 6/7. Catalyzes the transfer of the enolpyruvyl moiety of phosphoenolpyruvate (PEP) to the 5-hydroxyl of shikimate-3-phosphate (S3P) to produce enolpyruvyl shikimate-3-phosphate and inorganic phosphate. In Janthinobacterium sp. (strain Marseille) (Minibacterium massiliensis), this protein is 3-phosphoshikimate 1-carboxyvinyltransferase.